A 122-amino-acid polypeptide reads, in one-letter code: MHAISQIRLTFNQDRPDHEHDDDGSAGIAVQEAKPALQAPPMYKVVLFNDDYTPMDFVVEVLEVFFNLNRELATKVMLAVHTEGRAVCGVFTRDIAETKAMQVNQYARESQHPLLCEIEKDG.

It belongs to the ClpS family. In terms of assembly, binds to the N-terminal domain of the chaperone ClpA.

Involved in the modulation of the specificity of the ClpAP-mediated ATP-dependent protein degradation. The protein is ATP-dependent Clp protease adapter protein ClpS of Pseudomonas fluorescens (strain SBW25).